The chain runs to 847 residues: DNA replication licensing factor MCM4 (847 aa).

A compositionally biased stretch (polar residues) spans 1–31; that stretch reads MASDSSLGNTNDGPPSPGENVSSPIENTYSS. The segment at 1-123 is disordered; that stretch reads MASDSSLGNT…GGDDTTPTFV (123 aa). Low complexity predominate over residues 60–75; that stretch reads ASSNSTPPTSRPSAAR. Positions 81-94 are enriched in gly residues; sequence GHGGGGGGGGGGDP. The C4-type zinc-finger motif lies at 271–299; the sequence is CLVCGYFSDPIIVDRGKISEPPTCLKQEC. The region spanning 435-641 is the MCM domain; that stretch reads IYERLSRSLA…QTDRRLAKHI (207 aa). An ATP-binding site is contributed by 485–492; sequence GDPGTSKS. The Arginine finger signature appears at 617–620; sequence SRFD.

It belongs to the MCM family. Component of the minichromosome maintenance (MCM) complex, a heterotetramer composed of MCM2, MCM3, MCM4, MCM5, MCM6 and MCM7. Interacts with ETG1. As to expression, expressed in shoot apex and flower buds.

It is found in the nucleus. The enzyme catalyses ATP + H2O = ADP + phosphate + H(+). Probable component of the MCM2-7 complex (MCM complex) that may function as a DNA helicase and which is essential to undergo a single round of replication initiation and elongation per cell cycle in eukaryotic cells. In Arabidopsis thaliana (Mouse-ear cress), this protein is DNA replication licensing factor MCM4 (MCM4).